The chain runs to 277 residues: Large ribosomal subunit protein uL2 (277 aa).

The interval 222–277 is disordered; that stretch reads GVAMNPVDHPHGGGEGRTSGGRHPVSPWGKSTKGKRTRSNKATDKFIMHTRHQRKK.

Belongs to the universal ribosomal protein uL2 family. As to quaternary structure, part of the 50S ribosomal subunit. Forms a bridge to the 30S subunit in the 70S ribosome.

In terms of biological role, one of the primary rRNA binding proteins. Required for association of the 30S and 50S subunits to form the 70S ribosome, for tRNA binding and peptide bond formation. It has been suggested to have peptidyltransferase activity; this is somewhat controversial. Makes several contacts with the 16S rRNA in the 70S ribosome. This chain is Large ribosomal subunit protein uL2, found in Bartonella quintana (strain Toulouse) (Rochalimaea quintana).